A 1163-amino-acid polypeptide reads, in one-letter code: RLVEVVQHIVVRRTDCGTIRGISVNTRNGMMPEIILIQTLIGRVVAENIYIGSRCIVVRNQDIGIGLINRFITFQTQPIFIRTPFTCRNTSWICRLCYGRSPIHGDLVELGEAVGIIAGQSIGEPGTQLTLRTFHTGGVFTGGTAEYVRAPSNGKIKLNEDLVHPTRTRHGYPAFICNIDLYVTIESDDIIHNVIIPPKSFLLVQNDQYVKSEQVIAEIRAGTYTFNLKERVRKHIYSDSEGEMHWSTDVYHASEFMYSNVHILPKTSHLWILSGKSCRSNTIHFLLRKDQDQITMDSLSNGKTNISNLLERNDQVKHKLFRFNTFGTKEKGISDYSIFNEIICTDHSYPAIFHDTFYFLAKRRRNRFLIPFPFQSIQERKNERMSPSGVSIEIPINGIFHRNSIFAYFDDPQYRRHSSGITKYRTIGIHSIFQKEDFIEYRGIKELKPKSQIQVDRFFFIPEEVHILPKSSSLMVRNNSLVGIGTPITFNIRSRVGGLVRLDKKKKKIELKIFSGNIHFPGEMDKISRHSAILIPPGTVKKKKCNKSKKIKNWIYVQWIATTKKKYFVLVRPVILYEIPDSNNFVKLFPQDLFQEKDNLELKVVNYILYGNGKSIRGISDTRIQLVRTCLVFNWDDGKNSSSIEEAPASFIEVRTNGLIEYFLRIDLVKSNTSYIRKRNEPSGFGLIGDNKSDRINPFFSIHSKGKIQQSLSQNHGTIRMLLNRNKECRSWIILSSSNCFQMRPFNNEKSHNGIKKDPIISINNNGPLGIALQVANFYSLYHLITHNQISIIKNLQLDKLTEIFQVIKYYLMDENDKICKPDLYSNIILNPFHLNWFFLHHFYCEKTFTRISLGQFICENICIAQMKNRPHLKLKSGQVIIVQMDSVIIRSANPYLATPGATIHGHYGEILSQGDILVTFIYEKSRSGDITQGLPKVEQILEIRSIDSISMNLEKRIDAWNECITKIIGIPWGFLIGAELTIAQSRISLVNKIQKVYRSQGVHIHNRHIEIIVRQITSKVLVSEDGMSNIFLPGELIGLLRAERTGRALEEAICYRALLLGVTKTSLNTQSFISEASFQETARVLAKAALRGRIDWLKGLKENVVLGGMIPVGTGFKRIMHRSRSRQHNKITRKKKLFEVEIRNLLFHHRKLLDFANFKEFM.

Positions 16, 87, 94, and 97 each coordinate Zn(2+).

This sequence belongs to the RNA polymerase beta' chain family. RpoC2 subfamily. As to quaternary structure, in plastids the minimal PEP RNA polymerase catalytic core is composed of four subunits: alpha, beta, beta', and beta''. When a (nuclear-encoded) sigma factor is associated with the core the holoenzyme is formed, which can initiate transcription. It depends on Zn(2+) as a cofactor.

It is found in the plastid. The protein localises to the chloroplast. It catalyses the reaction RNA(n) + a ribonucleoside 5'-triphosphate = RNA(n+1) + diphosphate. Its function is as follows. DNA-dependent RNA polymerase catalyzes the transcription of DNA into RNA using the four ribonucleoside triphosphates as substrates. This Pisum sativum (Garden pea) protein is DNA-directed RNA polymerase subunit beta'' (rpoC2).